Reading from the N-terminus, the 233-residue chain is MAKLTKRMRTIREKVDATKQYDINEAVVLLKELATAKFVESVDVAVNLGIDARKSDQNVRGATVLPHGTGRSVRVAVFTQGANAEAAKAAGAELVGMEDLAELVKKGEMDFDVVIASPDAMRVVGQLGQILGPRGLMPNPKVGTVTPNVAEAVQNAKAGQVRYRNDKNGIIHTTIGKVDFDADKLKENLEALLVALKKGKPSSAKGIYIKKVSLSTTMGAGVAIDQSGLNASA.

This sequence belongs to the universal ribosomal protein uL1 family. In terms of assembly, part of the 50S ribosomal subunit.

Functionally, binds directly to 23S rRNA. The L1 stalk is quite mobile in the ribosome, and is involved in E site tRNA release. Its function is as follows. Protein L1 is also a translational repressor protein, it controls the translation of the L11 operon by binding to its mRNA. This is Large ribosomal subunit protein uL1 from Photorhabdus laumondii subsp. laumondii (strain DSM 15139 / CIP 105565 / TT01) (Photorhabdus luminescens subsp. laumondii).